The primary structure comprises 378 residues: Ribosomal RNA large subunit methyltransferase G (378 aa).

The protein belongs to the methyltransferase superfamily. RlmG family.

The protein localises to the cytoplasm. It catalyses the reaction guanosine(1835) in 23S rRNA + S-adenosyl-L-methionine = N(2)-methylguanosine(1835) in 23S rRNA + S-adenosyl-L-homocysteine + H(+). Specifically methylates the guanine in position 1835 (m2G1835) of 23S rRNA. In Salmonella dublin (strain CT_02021853), this protein is Ribosomal RNA large subunit methyltransferase G.